Here is a 306-residue protein sequence, read N- to C-terminus: MASAGAKRQPEAQNGAAVGLAQVAEIPECPGTEECLVPAHETCSTPGEDRCPVGHSLEPELQEEGINLGEEGLNPGVEAGEERGPKPTSSIVRPAHGPKRKAEAELPPGLLLQKEEPEGSHSESSLSSKQHKKAKKRKSVGAPVPPAVASASAPTETLGLEPFAVPWVLAGKAQRLRPLYQYINYCNPELNQAGDGDREPEAEPESELALAPEEAGVEQLQLQTLLPMAGELGLGLALPCPNPLAPLTHNLPPLVEEVGEEPGGLSSLRVSGSLKAEVDKTTQVDIDKMLSVCAAPLVPPLSPQYK.

The tract at residues histidine 40–glutamate 156 is disordered. The segment covering glutamate 64–leucine 73 has biased composition (low complexity). Positions lysine 129 to serine 139 are enriched in basic residues.

This is an uncharacterized protein from Rattus norvegicus (Rat).